A 1328-amino-acid polypeptide reads, in one-letter code: ABC transporter C family member 7 (1328 aa).

Positions 104 to 389 constitute an ABC transmembrane type-1 1 domain; it reads HKTSIIVQIF…LPQAIQRLLS (286 aa). 6 helical membrane-spanning segments follow: residues 112-132, 140-160, 224-244, 245-265, 287-307, and 333-353; these read IFSA…ILYV, SFLV…FLSI, LILL…CWTI, GYSG…STFL, ISEM…LFFI, and MVVQ…YTLI. Residues 457–678 enclose the ABC transporter 1 domain; that stretch reads IELVNNDSIE…FDFESIMKTK (222 aa). 490–497 is an ATP binding site; the sequence is GVVGSGKS. Residues 684–695 show a composition bias toward low complexity; sequence LNNSNNNNNNNN. The segment at 684-708 is disordered; it reads LNNSNNNNNNNNNKEEEEDVENLEK. 5 helical membrane passes run 762–782, 802–822, 894–914, 988–1008, and 1014–1034; these read FIFF…FLLF, DSFY…FLGI, VLMM…LALF, IGIK…FFSL, and GLSV…NWCI. The 282-residue stretch at 765 to 1046 folds into the ABC transmembrane type-1 2 domain; that stretch reads FFTMIMMYII…YIEFSMKMSS (282 aa). An ABC transporter 2 domain is found at 1083-1316; the sequence is IQFKNVEIKY…INNQNSKFKK (234 aa). 1117–1124 contacts ATP; sequence GKSGSGKS.

It belongs to the ABC transporter superfamily. ABCC family. Conjugate transporter (TC 3.A.1.208) subfamily.

Its subcellular location is the membrane. The polypeptide is ABC transporter C family member 7 (abcC7) (Dictyostelium discoideum (Social amoeba)).